A 342-amino-acid polypeptide reads, in one-letter code: Nucleoid-associated protein SO_2177 (342 aa).

It belongs to the YejK family.

The protein resides in the cytoplasm. Its subcellular location is the nucleoid. In Shewanella oneidensis (strain ATCC 700550 / JCM 31522 / CIP 106686 / LMG 19005 / NCIMB 14063 / MR-1), this protein is Nucleoid-associated protein SO_2177.